A 274-amino-acid polypeptide reads, in one-letter code: NADH-ubiquinone oxidoreductase chain 2 (274 aa).

8 consecutive transmembrane segments (helical) span residues 28–48 (MIIM…FWFP), 54–74 (LTWM…LMLI), 79–99 (IKYL…IGGL), 107–127 (LMAF…MFSE), 128–148 (SIWL…TFMF), 171–191 (FTLF…GFLP), 206–226 (FLLT…LRIC), and 254–274 (LIMT…YFMF).

The protein belongs to the complex I subunit 2 family.

The protein resides in the mitochondrion inner membrane. The catalysed reaction is a ubiquinone + NADH + 5 H(+)(in) = a ubiquinol + NAD(+) + 4 H(+)(out). Functionally, core subunit of the mitochondrial membrane respiratory chain NADH dehydrogenase (Complex I) that is believed to belong to the minimal assembly required for catalysis. Complex I functions in the transfer of electrons from NADH to the respiratory chain. The immediate electron acceptor for the enzyme is believed to be ubiquinone. This is NADH-ubiquinone oxidoreductase chain 2 (mt:ND2) from Drosophila sechellia (Fruit fly).